A 356-amino-acid chain; its full sequence is Nuclear hormone receptor family member nhr-42 (356 aa).

Residues serine 7 to serine 82 constitute a DNA-binding region (nuclear receptor). The segment at cysteine 10–cysteine 30 adopts an NR C4-type zinc-finger fold. The NR C4-type; atypical zinc-finger motif lies at cysteine 48–cysteine 70. The NR LBD domain maps to threonine 108–glutamate 356.

Belongs to the nuclear hormone receptor family.

The protein resides in the nucleus. Functionally, orphan nuclear receptor. The sequence is that of Nuclear hormone receptor family member nhr-42 (nhr-42) from Caenorhabditis elegans.